Consider the following 602-residue polypeptide: Major facilitator superfamily multidrug transporter mfsB (602 aa).

12 helical membrane passes run 29-49, 67-87, 98-118, 128-148, 160-180, 201-221, 329-349, 378-398, 411-431, 439-459, 468-486, and 505-525; these read FVLA…FPYV, LYAG…GMFW, PVLI…GFAP, ALGG…AEIV, IMPF…GALA, FLLP…VGFL, IVAY…IPVF, FMLA…FPFV, VLLV…LPSI, LALI…AILL, VLGS…SRAL, and IIAW…SFWM. The interval 527 to 602 is disordered; that stretch reads ESEPRRDSEK…RSNPLAFAED (76 aa). The span at 528–538 shows a compositional bias: basic and acidic residues; the sequence is SEPRRDSEKAG.

Belongs to the major facilitator superfamily.

The protein resides in the membrane. Its function is as follows. Major facilitator superfamily transporter that may be involved in A.fumigatus adaptation to azoles such as vorizonazole. The protein is Major facilitator superfamily multidrug transporter mfsB of Aspergillus fumigatus (strain ATCC MYA-4609 / CBS 101355 / FGSC A1100 / Af293) (Neosartorya fumigata).